Consider the following 240-residue polypeptide: Orotidine 5'-phosphate decarboxylase (240 aa).

Substrate contacts are provided by residues Asp15, Lys37, 64–73 (DLKYHDIPNT), Thr127, Arg188, Gln197, Gly217, and Arg218. The active-site Proton donor is Lys66.

The protein belongs to the OMP decarboxylase family. Type 1 subfamily. In terms of assembly, homodimer.

It catalyses the reaction orotidine 5'-phosphate + H(+) = UMP + CO2. It participates in pyrimidine metabolism; UMP biosynthesis via de novo pathway; UMP from orotate: step 2/2. Catalyzes the decarboxylation of orotidine 5'-monophosphate (OMP) to uridine 5'-monophosphate (UMP). The polypeptide is Orotidine 5'-phosphate decarboxylase (Geobacter sp. (strain M21)).